A 137-amino-acid polypeptide reads, in one-letter code: Dormancy-associated protein homolog 3 (137 aa).

Disordered stretches follow at residues 1–55 (MGLL…DSLP) and 69–137 (KPPG…TYGM). A compositionally biased stretch (polar residues) spans 32 to 43 (FRPSSGNDQSEA). The segment covering 70 to 87 (PPGYQGSSAPASPAGSTP) has biased composition (low complexity). S81 carries the phosphoserine modification. Residues 88-97 (PLSPFSPPLS) are compositionally biased toward pro residues. Over residues 104–118 (EPFRFRRRSTSDAFE) the composition is skewed to basic and acidic residues. Residues 127–137 (GPRSSPPTYGM) show a composition bias toward polar residues.

It belongs to the DRM1/ARP family.

This Arabidopsis thaliana (Mouse-ear cress) protein is Dormancy-associated protein homolog 3.